A 114-amino-acid polypeptide reads, in one-letter code: Protein ORF3 (114 aa).

2 hydrophobic regions span residues 6–22 (CDLG…CLCC) and 33–53 (AVVG…GLIL). An interaction with host HPX region spans residues 28-68 (VSRLAAVVGGAAAVPAVVSGVTGLILSPSQSPIFIQPTPSP). The interval 48-72 (VTGLILSPSQSPIFIQPTPSPPMSP) is interaction with the capsid protein. Residue serine 71 is modified to Phosphoserine; by host. A homodimerization, and interaction with host AMBP/bikunin region spans residues 72–114 (PLRPGLDLVFANQPDHSAPLGVTRPSAPPLPHVVDLPQLGPRR). The disordered stretch occupies residues 91–114 (LGVTRPSAPPLPHVVDLPQLGPRR). The tract at residues 95–104 (RPSAPPLPHV) is interaction with host SRC, HCK, FYN, PIK3R3 and GRB2. The short motif at 96-99 (PSAP) is the PTAP/PSAP motif element.

Belongs to the hepevirus ORF3 protein family. As to quaternary structure, forms homooligomers. Interacts with host SRC, HCK, FYN, PIK3R3 and GRB2 (via SH3 domain); binding does not activate the kinases. Interacts with host AMBP/bikunin and AMBP/alpha-1-microglobulin peptides. Interacts with host HPX/hemopexin. Interacts (when phosphorylated) with capsid protein ORF2. Interacts with host TSG101; this interaction plays a role in viral release from the host cell. Interacts with host SIRPA; this interaction down-regulates the phosphorylation of host IRF3. Palmitoylated in the N-terminus.

It is found in the host endoplasmic reticulum membrane. The protein localises to the host cytoplasm. Its subcellular location is the host cytoskeleton. It localises to the virion. The protein resides in the host cell membrane. Functionally, small multifunctional phosphoprotein involved in virion morphogenesis, egress and counteracting host innate immunity. Plays critical roles in the final steps of viral release by interacting with host TSG101, a member of the vacuolar protein-sorting pathway and using other cellular host proteins involved in vesicle formation pathway. Also acts as a viroporin and forms ion conductive pores allowing viral particle release. Impairs the generation of type I interferon by down-regulating host TLR3 and TLR7 as well as their downstream signaling pathways. Down-regulates the phosphorylation of host IRF3 via the interaction with host SIRP-alpha, thereby inhibiting IFN-I expression. Interacts with host microtubules. In Homo sapiens (Human), this protein is Protein ORF3.